The following is a 656-amino-acid chain: Translation factor GUF1 homolog, mitochondrial (656 aa).

The N-terminal 29 residues, 1-29, are a transit peptide targeting the mitochondrion; sequence MLAVRRRGLRVLAVAPLRVRGLATTSTEF. The 185-residue stretch at 54–238 folds into the tr-type G domain; that stretch reads ERIRNFSIVA…AVVERLPPPV (185 aa). Residues 63 to 70, 131 to 135, and 185 to 188 each bind GTP; these read AHIDHGKS, DTPGH, and TKID.

This sequence belongs to the TRAFAC class translation factor GTPase superfamily. Classic translation factor GTPase family. LepA subfamily.

It localises to the mitochondrion inner membrane. It catalyses the reaction GTP + H2O = GDP + phosphate + H(+). Promotes mitochondrial protein synthesis. May act as a fidelity factor of the translation reaction, by catalyzing a one-codon backward translocation of tRNAs on improperly translocated ribosomes. Binds to mitochondrial ribosomes in a GTP-dependent manner. The polypeptide is Translation factor GUF1 homolog, mitochondrial (Phytophthora infestans (strain T30-4) (Potato late blight agent)).